Reading from the N-terminus, the 132-residue chain is UPF0299 membrane protein YohJ (132 aa).

4 helical membrane-spanning segments follow: residues 7 to 27 (IIWQ…AGIF), 31 to 51 (LLPV…VLLA), 63 to 83 (GCYV…VGVM), and 93 to 113 (FGPV…VVSW).

It belongs to the UPF0299 family.

It is found in the cell inner membrane. The protein is UPF0299 membrane protein YohJ of Shigella boydii serotype 4 (strain Sb227).